A 485-amino-acid chain; its full sequence is MSTSTTYEKLPLQPLFDTIEELKPKFIERLQKAIAIPSVSSDESLRPKVVEMANFLVDELKTLGFTDIQLKELGTQPPPVQDANLQLPPIVLGRFGNDPAKKTVLVYGHYDVQPALKDDGWKTEPFTMHYDKEKEILYGRGSTDDKGPVVGWLNVIEAHNKLGWELPVNLVVCFEGMEESGSLGLDELVAKEAQNYFKKVDQVTISDNYWLGTTKPVLTYGLRGCNYYQIIIEGPGADLHSGIFGGIIAEPMTDLIKVMSTLVDGSGKILIPGVYDMVAPLTDKEDQLYDSIDFSVEELNAASGSQTSLHDNKKDILKHRWRFPSLSLHGIEGAFSGAGAKTVIPAKVVGKFSIRTVPDIESKKLDDLVFQHITSEFKKLNSPNKFKVELIHDGNYWVSDPFNDSFTAAAKATQDVWNVVPDFTREGGSIPITLTFEKELGVDVLLLPMGRGDDGAHSINEKLDVSNYINGCKTLGGYLHYYGKA.

His-109 is a Zn(2+) binding site. Asp-111 is an active-site residue. Residue Asp-144 participates in Zn(2+) binding. The Proton acceptor role is filled by Glu-178. Residues Glu-179, Asp-207, and His-457 each contribute to the Zn(2+) site.

It belongs to the peptidase M20A family. In terms of assembly, homodimer. Component of the GSH degradosomal complex. The cofactor is Zn(2+). It depends on Mn(2+) as a cofactor.

Its subcellular location is the cytoplasm. Its function is as follows. Catalytic component of the GSH degradosomal complex involved in the degradation of glutathione (GSH) and other peptides containing a gamma-glu-X bond. Also functions as a dipeptidase with high specificity for Cys-Gly and no activity toward tri- or tetrapeptides. In Candida albicans (strain SC5314 / ATCC MYA-2876) (Yeast), this protein is Cys-Gly metallodipeptidase DUG1 (DUG1).